Consider the following 87-residue polypeptide: DNA-directed RNA polymerase subunit omega (87 aa).

Belongs to the RNA polymerase subunit omega family. As to quaternary structure, the RNAP catalytic core consists of 2 alpha, 1 beta, 1 beta' and 1 omega subunit. When a sigma factor is associated with the core the holoenzyme is formed, which can initiate transcription.

It carries out the reaction RNA(n) + a ribonucleoside 5'-triphosphate = RNA(n+1) + diphosphate. Its function is as follows. Promotes RNA polymerase assembly. Latches the N- and C-terminal regions of the beta' subunit thereby facilitating its interaction with the beta and alpha subunits. The protein is DNA-directed RNA polymerase subunit omega of Pseudomonas entomophila (strain L48).